The sequence spans 690 residues: MPRQHAIEDYRNFGIMAHIDAGKTTTTERILYYTGKSHKIGEVHEGAATMDWMEQEQERGITITSAATTAFWNGKRLNIIDTPGHVDFTIEVERSLRVLDGAVCVLDSNQGVEPQTETVWRQGDKYKVPRIVFANKMDKTGADFFKCLADIVDRLGAKPVAIQLPIGAENNFKGCIDLVTMKAIVWNDESLGAKFDHVEIPAELADQAKEYREKLVEAAVELDDDAMSAYLEGTEPDEATLKRLIRKAVLSGAFYPVLCGSAFKNKGVQPLLDAVVDYLPSPLDVPAIKGTDDKGNEVVRKADDKEPLSLLAFKIMDDPFVGTITFCRIYSGILTSGTGVVNSTREKKERIGRMLLMHANNREDIKEAYAGDIVALAGLKEARTGDTLCDPNNQVILEKMEFPEPVIEIAIEPKSKADQEKLGIALAKLAAEDPSFRVSTDHESGQTILKGMGELHLDIKVDILKRTYKVDANIGAPQVAFRERITKPANVDYTHKKQTGGTGQFAAVSLVVEPNEPGGGYVFESKIVGGAVPKEYIPGVEKGIESVLGAGVVAGFPVVDVKVALVDGKYHDVDSSALAFEIASRAAFREALQKGKSVLLEPIMKVEVVTPEDYTGSVIGDLNSRRGQIQGQDMRGNANVINAMVPLMNMFGYVNNLRSMSQGRATFTMQFSHYAEAPANVSAEVQKKFA.

The region spanning 8-283 (EDYRNFGIMA…AVVDYLPSPL (276 aa)) is the tr-type G domain. GTP-binding positions include 17-24 (AHIDAGKT), 81-85 (DTPGH), and 135-138 (NKMD).

It belongs to the TRAFAC class translation factor GTPase superfamily. Classic translation factor GTPase family. EF-G/EF-2 subfamily.

The protein resides in the cytoplasm. Catalyzes the GTP-dependent ribosomal translocation step during translation elongation. During this step, the ribosome changes from the pre-translocational (PRE) to the post-translocational (POST) state as the newly formed A-site-bound peptidyl-tRNA and P-site-bound deacylated tRNA move to the P and E sites, respectively. Catalyzes the coordinated movement of the two tRNA molecules, the mRNA and conformational changes in the ribosome. The polypeptide is Elongation factor G (Bradyrhizobium sp. (strain BTAi1 / ATCC BAA-1182)).